We begin with the raw amino-acid sequence, 685 residues long: Nucleolar protein 4 (685 aa).

The disordered stretch occupies residues 1 to 21 (MEETIENVEVPSSNVSKQNDD). Residues 26-103 (KTLFVRSIPQ…HILRVDIAKR (78 aa)) form the RRM 1 domain. Residues 106 to 123 (RSKKTSEVVEKSTPESSE) are compositionally biased toward basic and acidic residues. The disordered stretch occupies residues 106–142 (RSKKTSEVVEKSTPESSEKITGQNNEDEDDADGEDSM). Over residues 130–140 (NEDEDDADGED) the composition is skewed to acidic residues. The region spanning 147 to 225 (PKLIIRNMPW…RKVAVDFAVQ (79 aa)) is the RRM 2 domain. Residues 231–242 (DYKKAQPEMNDK) are compositionally biased toward basic and acidic residues. Positions 231–285 (DYKKAQPEMNDKDDNESGNEDAEENHDDEEDENEEEDRQVDQASKNKESKRKAQN) are disordered. A compositionally biased stretch (acidic residues) spans 243 to 268 (DDNESGNEDAEENHDDEEDENEEEDR). Ser-247 bears the Phosphoserine mark. RRM domains are found at residues 290–383 (FSVF…PTLV) and 462–612 (TRLA…FAIE). Thr-379 is subject to Phosphothreonine. Basic residues predominate over residues 622-631 (EQLKQARTKR). The tract at residues 622–685 (EQLKQARTKR…FKRKRKHAKK (64 aa)) is disordered. Over residues 645–672 (SENKKPKKEEATTPTNPDDKKMGDDIKR) the composition is skewed to basic and acidic residues. A compositionally biased stretch (basic residues) spans 674–685 (IGFKRKRKHAKK).

In terms of assembly, interacts with NOP1.

Its subcellular location is the nucleus. It is found in the nucleolus. Required for 60S ribosomal subunit synthesis. Probably involved in the processing of 27S rRNA to produce mature 25S rRNA. The polypeptide is Nucleolar protein 4 (NOP4) (Saccharomyces cerevisiae (strain ATCC 204508 / S288c) (Baker's yeast)).